The following is a 266-amino-acid chain: Putative zinc finger protein 034R (266 aa).

The segment at 84–176 is disordered; that stretch reads SPTKSVDKAA…GPKRDSTQQP (93 aa). The segment covering 88-100 has biased composition (basic and acidic residues); sequence SVDKAAQKEKKMP. Polar residues-rich tracts occupy residues 105-119 and 160-176; these read KPTT…QGIL and GVSQ…TQQP. A C3H1-type zinc finger spans residues 180–192; sequence CKSVLKQAKCYFG.

This sequence belongs to the IIV-6 077L family.

The sequence is that of Putative zinc finger protein 034R from Aedes vexans (Inland floodwater mosquito).